A 525-amino-acid polypeptide reads, in one-letter code: GMP synthase [glutamine-hydrolyzing] (525 aa).

The Glutamine amidotransferase type-1 domain occupies 9–207 (RILILDFGSQ…VRDICQCEAL (199 aa)). Residue cysteine 86 is the Nucleophile of the active site. Residues histidine 181 and glutamate 183 contribute to the active site. Residues 208-400 (WTPAKIIDDA…LGLPYDMLYR (193 aa)) enclose the GMPS ATP-PPase domain. ATP is bound at residue 235–241 (SGGVDSS).

In terms of assembly, homodimer.

It catalyses the reaction XMP + L-glutamine + ATP + H2O = GMP + L-glutamate + AMP + diphosphate + 2 H(+). The protein operates within purine metabolism; GMP biosynthesis; GMP from XMP (L-Gln route): step 1/1. Functionally, catalyzes the synthesis of GMP from XMP. The sequence is that of GMP synthase [glutamine-hydrolyzing] from Escherichia coli O139:H28 (strain E24377A / ETEC).